The following is a 324-amino-acid chain: tRNA N6-adenosine threonylcarbamoyltransferase (324 aa).

His-107, His-111, and Tyr-127 together coordinate Fe cation. Substrate-binding positions include Tyr-127 to Gly-131, Asp-159, Gly-172, Glu-176, and Asn-257. Asp-285 contributes to the Fe cation binding site.

It belongs to the KAE1 / TsaD family. As to quaternary structure, monomer. Component of the KEOPS complex that consists of Kae1, Bud32, Cgi121 and Pcc1; the whole complex dimerizes. It depends on Fe(2+) as a cofactor.

It localises to the cytoplasm. It carries out the reaction L-threonylcarbamoyladenylate + adenosine(37) in tRNA = N(6)-L-threonylcarbamoyladenosine(37) in tRNA + AMP + H(+). Functionally, required for the formation of a threonylcarbamoyl group on adenosine at position 37 (t(6)A37) in tRNAs that read codons beginning with adenine. Is a component of the KEOPS complex that is probably involved in the transfer of the threonylcarbamoyl moiety of threonylcarbamoyl-AMP (TC-AMP) to the N6 group of A37. Kae1 likely plays a direct catalytic role in this reaction, but requires other protein(s) of the complex to fulfill this activity. The sequence is that of tRNA N6-adenosine threonylcarbamoyltransferase from Pyrococcus horikoshii (strain ATCC 700860 / DSM 12428 / JCM 9974 / NBRC 100139 / OT-3).